The following is a 370-amino-acid chain: Aminomethyltransferase (370 aa).

Belongs to the GcvT family. As to quaternary structure, the glycine cleavage system is composed of four proteins: P, T, L and H.

The catalysed reaction is N(6)-[(R)-S(8)-aminomethyldihydrolipoyl]-L-lysyl-[protein] + (6S)-5,6,7,8-tetrahydrofolate = N(6)-[(R)-dihydrolipoyl]-L-lysyl-[protein] + (6R)-5,10-methylene-5,6,7,8-tetrahydrofolate + NH4(+). The glycine cleavage system catalyzes the degradation of glycine. The protein is Aminomethyltransferase of Prochlorococcus marinus (strain AS9601).